Here is a 152-residue protein sequence, read N- to C-terminus: Small ribosomal subunit protein uS19x (152 aa).

Belongs to the universal ribosomal protein uS19 family.

It is found in the cytoplasm. This Arabidopsis thaliana (Mouse-ear cress) protein is Small ribosomal subunit protein uS19x (RPS15D).